We begin with the raw amino-acid sequence, 190 residues long: NADH dehydrogenase [ubiquinone] iron-sulfur protein 3 (190 aa).

Belongs to the complex I 30 kDa subunit family. In terms of assembly, complex I is composed of about 45 different subunits. This is a component of the iron-sulfur (IP) fragment of the enzyme.

It localises to the mitochondrion inner membrane. It catalyses the reaction a ubiquinone + NADH + 5 H(+)(in) = a ubiquinol + NAD(+) + 4 H(+)(out). Its function is as follows. Core subunit of the mitochondrial membrane respiratory chain NADH dehydrogenase (Complex I) that is believed to belong to the minimal assembly required for catalysis. Complex I functions in the transfer of electrons from NADH to the respiratory chain. The immediate electron acceptor for the enzyme is believed to be ubiquinone. This Oryza sativa subsp. japonica (Rice) protein is NADH dehydrogenase [ubiquinone] iron-sulfur protein 3 (NAD9).